A 270-amino-acid polypeptide reads, in one-letter code: Tryptophan synthase alpha chain (270 aa).

Residues glutamate 49 and aspartate 60 each act as proton acceptor in the active site.

It belongs to the TrpA family. In terms of assembly, tetramer of two alpha and two beta chains.

It catalyses the reaction (1S,2R)-1-C-(indol-3-yl)glycerol 3-phosphate + L-serine = D-glyceraldehyde 3-phosphate + L-tryptophan + H2O. It functions in the pathway amino-acid biosynthesis; L-tryptophan biosynthesis; L-tryptophan from chorismate: step 5/5. Its function is as follows. The alpha subunit is responsible for the aldol cleavage of indoleglycerol phosphate to indole and glyceraldehyde 3-phosphate. The chain is Tryptophan synthase alpha chain from Paraburkholderia phytofirmans (strain DSM 17436 / LMG 22146 / PsJN) (Burkholderia phytofirmans).